Here is a 97-residue protein sequence, read N- to C-terminus: Aspartyl/glutamyl-tRNA(Asn/Gln) amidotransferase subunit C (97 aa).

The segment at 74 to 97 (AEQALDQAPASQRDRFEVPRILGE) is disordered. The span at 85–97 (QRDRFEVPRILGE) shows a compositional bias: basic and acidic residues.

The protein belongs to the GatC family. In terms of assembly, heterotrimer of A, B and C subunits.

It catalyses the reaction L-glutamyl-tRNA(Gln) + L-glutamine + ATP + H2O = L-glutaminyl-tRNA(Gln) + L-glutamate + ADP + phosphate + H(+). It carries out the reaction L-aspartyl-tRNA(Asn) + L-glutamine + ATP + H2O = L-asparaginyl-tRNA(Asn) + L-glutamate + ADP + phosphate + 2 H(+). Its function is as follows. Allows the formation of correctly charged Asn-tRNA(Asn) or Gln-tRNA(Gln) through the transamidation of misacylated Asp-tRNA(Asn) or Glu-tRNA(Gln) in organisms which lack either or both of asparaginyl-tRNA or glutaminyl-tRNA synthetases. The reaction takes place in the presence of glutamine and ATP through an activated phospho-Asp-tRNA(Asn) or phospho-Glu-tRNA(Gln). The chain is Aspartyl/glutamyl-tRNA(Asn/Gln) amidotransferase subunit C from Corynebacterium kroppenstedtii (strain DSM 44385 / JCM 11950 / CIP 105744 / CCUG 35717).